The chain runs to 316 residues: Apolipoprotein E (316 aa).

The first 18 residues, 1–18 (MKVLWVALVVALLAGCQA), serve as a signal peptide directing secretion. 8 consecutive repeat copies span residues 79–100 (VLMEETMKEVKAYREELEGQLA), 101–122 (PMAQETQARVSKELQAAQARLG), 123–144 (SDMEDLRNRLAQYRSEVQAMLG), 145–166 (QSTEELRARMASHLRKLRKRLL), 167–188 (RDADDLKKRLAVYQAGASEGAE), 189–210 (RSVSAIRERLRPLVEQGQSRAA), 211–232 (TLSTQAAQPLLDRAEAWRQKLH), and 233–254 (GRLEEVGVRAQDRLDKMRQQLE). The 8 X 22 AA approximate tandem repeats stretch occupies residues 79-254 (VLMEETMKEV…RLDKMRQQLE (176 aa)). Position 142 is a methionine sulfoxide (Met142). Position 146 is a phosphoserine (Ser146). The tract at residues 157–167 (HLRKLRKRLLR) is LDL and other lipoprotein receptors binding. A heparin-binding site is contributed by 161 to 164 (LRKR). Residues 209 to 289 (AATLSTQAAQ…SWFEPLVGDM (81 aa)) are lipid-binding and lipoprotein association. O-linked (GalNAc...) threonine glycosylation occurs at Thr211. Heparin is bound at residue 228-235 (RQKLHGRL). The interval 265–316 (SQIRLQAEAFQARLRSWFEPLVGDMQRQWAGLVEKVQLALHLSPTSPPSENH) is homooligomerization. The tract at residues 277-289 (RLRSWFEPLVGDM) is specificity for association with VLDL.

It belongs to the apolipoprotein A1/A4/E family. As to quaternary structure, homotetramer. May interact with ABCA1; functionally associated with ABCA1 in the biogenesis of HDLs. May interact with APP/A4 amyloid-beta peptide; the interaction is extremely stable in vitro but its physiological significance is unclear. May interact with MAPT. May interact with MAP2. In the cerebrospinal fluid, interacts with secreted SORL1. Interacts with PMEL; this allows the loading of PMEL luminal fragment on ILVs to induce fibril nucleation. APOE exists as multiple glycosylated and sialylated glycoforms within cells and in plasma. The extent of glycosylation and sialylation are tissue and context specific. In terms of processing, glycated in plasma VLDL. Post-translationally, phosphorylated by FAM20C in the extracellular medium.

The protein localises to the secreted. It is found in the extracellular space. It localises to the extracellular matrix. Its subcellular location is the extracellular vesicle. The protein resides in the endosome. The protein localises to the multivesicular body. In terms of biological role, APOE is an apolipoprotein, a protein associating with lipid particles, that mainly functions in lipoprotein-mediated lipid transport between organs via the plasma and interstitial fluids. APOE is a core component of plasma lipoproteins and is involved in their production, conversion and clearance. Apolipoproteins are amphipathic molecules that interact both with lipids of the lipoprotein particle core and the aqueous environment of the plasma. As such, APOE associates with chylomicrons, chylomicron remnants, very low density lipoproteins (VLDL) and intermediate density lipoproteins (IDL) but shows a preferential binding to high-density lipoproteins (HDL). It also binds a wide range of cellular receptors including the LDL receptor/LDLR and the very low-density lipoprotein receptor/VLDLR that mediate the cellular uptake of the APOE-containing lipoprotein particles. Finally, APOE also has a heparin-binding activity and binds heparan-sulfate proteoglycans on the surface of cells, a property that supports the capture and the receptor-mediated uptake of APOE-containing lipoproteins by cells. The polypeptide is Apolipoprotein E (APOE) (Capra hircus aegagrus (Wild goat)).